The sequence spans 423 residues: Putative gustatory receptor 97a (423 aa).

Topologically, residues 1 to 31 (MRFLRRQTRRLRSIWQRSLPVRFRRGKLHTQ) are cytoplasmic. Residues 32 to 52 (LVTICLYATVFLNILYGVYLG) form a helical membrane-spanning segment. Residues 53 to 65 (RFSFRRKKFVFSK) are Extracellular-facing. The helical transmembrane segment at 66 to 86 (GLTIYSLFVATFFALFYIWNI) threads the bilayer. At 87-99 (YNEISTGQINLRD) the chain is on the cytoplasmic side. The helical transmembrane segment at 100–120 (TIGIYCYMNVCVCLFNYVTQW) threads the bilayer. Topologically, residues 121 to 152 (EKTLQIIRFQNSVPLFKVLDSLDISAMIVWRA) are extracellular. The chain crosses the membrane as a helical span at residues 153–173 (FIYGLLKIVFCPLITYITLIL). Topologically, residues 174–200 (YHRRSISESQWTSVTTTKTMLPLIVSN) are cytoplasmic. A helical transmembrane segment spans residues 201–221 (QINNCFFGGLVLANLIFAAVN). Topologically, residues 222-278 (RKLHGIVKEANMLQSPVQMNLHKPYYRMRRFCELADLLDELARKYGFTASRSKNYLR) are extracellular. Residues 279–299 (FTDWSMVLSMLMNLLGITMGC) form a helical membrane-spanning segment. Over 300–317 (YNQYLAIADHYINEEPFD) the chain is Cytoplasmic. The chain crosses the membrane as a helical span at residues 318 to 338 (LFLAIVLVVFLAVPFLELVMV). Residues 339–423 (ARISNQTLTR…SDLTLRFSLK (85 aa)) are Extracellular-facing. 2 N-linked (GlcNAc...) asparagine glycosylation sites follow: asparagine 343 and asparagine 393.

It belongs to the insect chemoreceptor superfamily. Gustatory receptor (GR) family. Gr22e subfamily. As to expression, in larvae, is expressed in neurons of the terminal external chemosensory organ.

The protein resides in the cell membrane. Functionally, probable gustatory receptor which mediates acceptance or avoidance behavior, depending on its substrates. The polypeptide is Putative gustatory receptor 97a (Gr97a) (Drosophila melanogaster (Fruit fly)).